Consider the following 1064-residue polypeptide: Valine--tRNA ligase, mitochondrial (1064 aa).

Residues M1 to H26 constitute a mitochondrion transit peptide. A disordered region spans residues F25–E65. Basic and acidic residues predominate over residues R42–A56. Positions P146–H156 match the 'HIGH' region motif. The 'KMSKS' region motif lies at K659–S663. K662 is an ATP binding site.

Belongs to the class-I aminoacyl-tRNA synthetase family.

The protein localises to the mitochondrion. It catalyses the reaction tRNA(Val) + L-valine + ATP = L-valyl-tRNA(Val) + AMP + diphosphate. Catalyzes the attachment of valine to tRNA(Val) in a two-step reaction: valine is first activated by ATP to form Val-AMP and then transferred to the acceptor end of tRNA(Val). This Macaca mulatta (Rhesus macaque) protein is Valine--tRNA ligase, mitochondrial (VARS2).